Reading from the N-terminus, the 244-residue chain is Securin-like protein (244 aa).

The disordered stretch occupies residues 31–53; it reads ELEKTPSRGGLGLVVNSSKTPGG.

As to quaternary structure, forms a complex (via C-terminus) with separase sep-1. Interaction with ify-1 stabilizes sep-1. Also maintains the complex in the cytoplasm during interphase and recruits it to chromosomes during the first meiotic division. Interacts with E3 ubiquitin-protein ligase etc-1. In terms of processing, ubiquitinated by etc-1 likely at the onset of anaphase, resulting in its degradation. As to expression, expressed in germ cells including oocytes.

The protein resides in the cytoplasm. The protein localises to the chromosome. Its subcellular location is the cytoskeleton. It localises to the spindle. In terms of biological role, acts as a chaperone and as an inhibitor for separase sep-1. Plays an essential role in maintaining chromosome cohesion prior to meiotic and mitotic anaphase, in cytokinesis and in organizing the spindle and the centrosome. Ubiquitination-dependent degradation at the onset of anaphase is likely to activate sep-1 resulting in the proteolysis of the cohesin complex and the subsequent segregation of the chromosomes. Also required for cortical granule exocytosis. The chain is Securin-like protein from Caenorhabditis elegans.